The chain runs to 1906 residues: Myosin light chain kinase, smooth muscle (1906 aa).

2 Ig-like C2-type domains span residues 28 to 117 (PAFT…VELT) and 156 to 244 (PKFA…AELT). Disordered stretches follow at residues 127-157 (SLPS…SPPK) and 309-453 (ETFY…SKVS). Over residues 309–321 (ETFYTSREAKDGK) the composition is skewed to basic and acidic residues. Composition is skewed to polar residues over residues 345–354 (LQKTSSTITL) and 384–402 (PLMT…QVSP). Positions 403–424 (RSRETENRAGVRKSVKEEKREP) are enriched in basic and acidic residues. 4 consecutive Ig-like C2-type domains span residues 429 to 517 (PQFE…WLLT), 521 to 613 (PKVE…AQVT), 637 to 725 (PIFL…ATLT), and 735 to 830 (PWFI…SSAS). One copy of the IIA-1 repeat lies at 660 to 676 (VSANPCPEIIWLHNGKE). The 4 X repeats, motif IIA stretch occupies residues 660–1833 (VSANPCPEII…EVMWYKDDQP (1174 aa)). Residues 693-708 (SLYIQEVFPEDTGKYT) form an IIB-1 repeat. Residues 693 to 1866 (SLYIQEVFPE…VCGDDDAKYT (1174 aa)) form a 5 X repeats, motif IIB region. The stretch at 758-774 (IAGDPFPTVHWFKDGQE) is one IIA-2 repeat. The stretch at 791–807 (TLILRNVQSRHAGQYEI) is one IIB-2 repeat. Disordered regions lie at residues 831-881 (RAEM…QEDV) and 947-1086 (PKTL…APSF). Basic and acidic residues-rich tracts occupy residues 833–850 (EMLR…RRDG) and 867–881 (SSSE…QEDV). The III-1 repeat unit spans residues 970 to 987 (AKKGTPKTPLPEKVPPPK). Positions 970-1226 (AKKGTPKTPL…TPPKAATPPQ (257 aa)) are 4 X repeats, motif III. Over residues 977 to 988 (TPLPEKVPPPKP) the composition is skewed to pro residues. Residues 999 to 1016 (AKKKPPAENGSASTPAPN) form an III-2 repeat. Over residues 1039–1051 (VKKEEKNDRKCEH) the composition is skewed to basic and acidic residues. One copy of the III-3 repeat lies at 1061–1078 (IGKKAENKPAASKPTPPP). 2 consecutive Ig-like C2-type domains span residues 1084 to 1172 (PSFT…CKVL) and 1225 to 1313 (PQIT…VNLT). An IIA-3 repeat occupies 1107–1123 (ISSDPPASVSWTLDSKA). An IIB-3 repeat occupies 1140–1156 (SLTIEKVMPEDGGEYKC). Positions 1180 to 1227 (KAAKPAEKKTKKPKTTLPPVLSTESSEATVKKKPAPKTPPKAATPPQI) are disordered. The III-4 repeat unit spans residues 1209-1226 (VKKKPAPKTPPKAATPPQ). The stretch at 1281 to 1297 (KLTISSTKQEHCGCYTL) is one IIB-4 repeat. Residues 1317-1364 (KPDPPAGTPCASDIRSSSLTLSWYGSSYDGGSAVQSYTVEIWNSVDNK) form a motif IA region. A Fibronectin type-III domain is found at 1321–1414 (PAGTPCASDI…ESEVVKVGEK (94 aa)). The tract at residues 1385–1402 (REYKFRVRAANVYGISEP) is motif IB. The interval 1414–1433 (KQEEELKEEEAELSDDEGKE) is disordered. Residues 1415 to 1432 (QEEELKEEEAELSDDEGK) are compositionally biased toward acidic residues. One can recognise a Protein kinase domain in the interval 1453 to 1708 (YNIEERLGSG…CTQCLQHPWL (256 aa)). Residues 1459-1467 (LGSGKFGQV) and lysine 1482 contribute to the ATP site. Residue aspartate 1574 is the Proton acceptor of the active site. Positions 1700-1763 (TQCLQHPWLQ…SGMSGRKASG (64 aa)) are calmodulin-binding. Positions 1716–1728 (EAKKLSKDRMKKY) are calmodulin autoinhibition (AM13) region. Positions 1730 to 1749 (ARRKWQKTGHAVRAIGRLSS) are calmodulin recognition (RS20) region. Serine 1762 bears the Phosphoserine; by PKG mark. The residue at position 1768 (serine 1768) is a Phosphoserine; by MAPK. Positions 1794–1885 (PYFTKTILDM…ATCTAELLVE (92 aa)) constitute an Ig-like C2-type 9 domain. The stretch at 1817–1833 (IEGYPDPEVMWYKDDQP) is one IIA-4 repeat. One copy of the IIB-5 repeat lies at 1851–1866 (SLTISEVCGDDDAKYT). The disordered stretch occupies residues 1885-1906 (ETMGKEGEGEGEGEEDEEEEEE). The segment covering 1893-1906 (GEGEGEEDEEEEEE) has biased composition (acidic residues).

Belongs to the protein kinase superfamily. CAMK Ser/Thr protein kinase family. All isoforms including Telokin bind calmodulin. It depends on Mg(2+) as a cofactor. Ca(2+) serves as cofactor. The C-terminus is deglutamylated, leading to the formation of Myosin light chain kinase, smooth muscle, deglutamylated form. The C-terminus is variable, with one to five C-terminal glutamyl residues being removed producing five forms differring in their number of C-terminal glutamyl residues. In terms of processing, acetylated. Post-translationally, phosphorylation of telokin by PKG has no significant effect on its myosin binding activity, but promotes translocation to the membrane. In terms of tissue distribution, isoform telokin is expressed in gizzard, heart, lung, intestine, and skeletal muscle although the levels of the expression in the latter were much less than that in the gizzard.

It localises to the cytoplasm. It is found in the cytosol. The protein resides in the membrane. The catalysed reaction is L-seryl-[myosin light chain] + ATP = O-phospho-L-seryl-[myosin light chain] + ADP + H(+). The enzyme catalyses L-threonyl-[myosin light chain] + ATP = O-phospho-L-threonyl-[myosin light chain] + ADP + H(+). With respect to regulation, activated by phosphorylation on Tyr-478. Isoforms which lack this tyrosine residue are not regulated in this way. All catalytically active isoforms require binding to calcium and calmodulin for activation. Phosphorylates a specific serine in the N-terminus of a myosin light chain, which leads to the formation of calmodulin/MLCK signal transduction complexes which allow selective transduction of calcium signals. This is Myosin light chain kinase, smooth muscle (Mylk) from Gallus gallus (Chicken).